A 398-amino-acid polypeptide reads, in one-letter code: SEC12-like protein 1 (398 aa).

An N-acetylmethionine modification is found at M1. The Cytoplasmic portion of the chain corresponds to 1–337 (MEIEEASRES…TVPKEWKEWQ (337 aa)). 5 WD repeats span residues 71-110 (DSDGDPVAVSVHPGGDYFVCSTSKGGCKLFELVGGATGIT), 120-159 (QNAGLQKCMAFSFDGSKLAVGGVDGCLRIMEWPNLSVILD), 162-201 (KAHKSIRDMDFSLDSEFLATTSTDGSARIWKAEDGFPLST), 252-291 (LSRKTASTMAVSLDGKYIALGGKDGDVSVAEVKTMEIYHY), and 296-334 (HLGQSIASLEFCPSERVMLTTSSEWGEMVTKLTVPKEWK). The helical transmembrane segment at 338-358 (IYALLFCLFMASVIAAYVFFE) threads the bilayer. At 359 to 398 (NSDSFWKLPMGKDQKRPKISLFGGSSSTPSEDHSRWNLDL) the chain is on the lumenal side.

As to expression, ubiquitous with higher levels in flowers, roots and senescing leaves.

The protein resides in the endoplasmic reticulum membrane. Its function is as follows. Involved in Pi uptake by facilitating the trafficking of PHT1-1/PHT1;1 from the endoplasmic reticulum to the plasma membrane. The chain is SEC12-like protein 1 (PHF1) from Arabidopsis thaliana (Mouse-ear cress).